The primary structure comprises 859 residues: Outer membrane usher protein AfaC (859 aa).

Residues M1 to R28 form the signal peptide.

Belongs to the fimbrial export usher family.

Its subcellular location is the cell outer membrane. Its function is as follows. Involved in the export and assembly of AFA-III afimbrial adhesin subunits across the outer membrane. This is Outer membrane usher protein AfaC (afaC) from Escherichia coli.